Here is a 100-residue protein sequence, read N- to C-terminus: MAKVNIKPLEDKILVQANEAETTTASGLVIPDTAKEKPQEGTVVAVGPGRWDEDGEKRIPLDVAEGDTVIYSKYGGTEIKYNGEEYLILSARDVLAVVSK.

This sequence belongs to the GroES chaperonin family. In terms of assembly, heptamer of 7 subunits arranged in a ring. Interacts with the chaperonin GroEL.

The protein localises to the cytoplasm. Functionally, together with the chaperonin GroEL, plays an essential role in assisting protein folding. The GroEL-GroES system forms a nano-cage that allows encapsulation of the non-native substrate proteins and provides a physical environment optimized to promote and accelerate protein folding. GroES binds to the apical surface of the GroEL ring, thereby capping the opening of the GroEL channel. The polypeptide is Co-chaperonin GroES (Mycobacterium tuberculosis (strain CDC 1551 / Oshkosh)).